The following is a 449-amino-acid chain: NADH-quinone oxidoreductase subunit H (449 aa).

9 helical membrane-spanning segments follow: residues 26 to 46 (FWLILLKGVAVFAFLLLMTLF), 96 to 116 (PIFILAPILSAVPAFLAFAVI), 136 to 156 (LPVSVLYMLAAASLGVYGLIL), 177 to 197 (IISYEVAMGLSFVAVFIYAGT), 211 to 231 (WYIALVPSFVLYCISMVGETN), 259 to 279 (FFFLAEYINMVTVSAIATTLF), 298 to 318 (WVPLIWFVLKLLLFLFFFIWL), 330 to 350 (FMAFGWKVLIPVGLLWVLVIA), and 365 to 385 (WLIGAGVVIGIMLIVALLDPG). Positions 396 to 449 (AERRKLAEAPSLESIPWPPPPPGGAHHRPAVPAGTSANGSSTVIPADPPPRQES) are disordered.

It belongs to the complex I subunit 1 family. NDH-1 is composed of 14 different subunits. Subunits NuoA, H, J, K, L, M, N constitute the membrane sector of the complex.

The protein resides in the cell membrane. The enzyme catalyses a quinone + NADH + 5 H(+)(in) = a quinol + NAD(+) + 4 H(+)(out). NDH-1 shuttles electrons from NADH, via FMN and iron-sulfur (Fe-S) centers, to quinones in the respiratory chain. The immediate electron acceptor for the enzyme in this species is believed to be ubiquinone. Couples the redox reaction to proton translocation (for every two electrons transferred, four hydrogen ions are translocated across the cytoplasmic membrane), and thus conserves the redox energy in a proton gradient. This subunit may bind ubiquinone. This Frankia alni (strain DSM 45986 / CECT 9034 / ACN14a) protein is NADH-quinone oxidoreductase subunit H.